The primary structure comprises 386 residues: Diaminopimelate decarboxylase (386 aa).

An N6-(pyridoxal phosphate)lysine modification is found at lysine 46. Residues glycine 214 and 246–249 contribute to the pyridoxal 5'-phosphate site; that span reads EIGR. Residues arginine 249, arginine 285, and tyrosine 289 each coordinate substrate. Cysteine 314 acts as the Proton donor in catalysis. Substrate-binding residues include glutamate 315 and tyrosine 343. A pyridoxal 5'-phosphate-binding site is contributed by tyrosine 343.

It belongs to the Orn/Lys/Arg decarboxylase class-II family. LysA subfamily. As to quaternary structure, homodimer. Requires pyridoxal 5'-phosphate as cofactor.

The enzyme catalyses meso-2,6-diaminopimelate + H(+) = L-lysine + CO2. It participates in amino-acid biosynthesis; L-lysine biosynthesis via DAP pathway; L-lysine from DL-2,6-diaminopimelate: step 1/1. Its function is as follows. Specifically catalyzes the decarboxylation of meso-diaminopimelate (meso-DAP) to L-lysine. In Thermotoga maritima (strain ATCC 43589 / DSM 3109 / JCM 10099 / NBRC 100826 / MSB8), this protein is Diaminopimelate decarboxylase.